The primary structure comprises 110 residues: uncharacterized protein (110 aa).

This is an uncharacterized protein from Schizosaccharomyces pombe (strain 972 / ATCC 24843) (Fission yeast).